Reading from the N-terminus, the 621-residue chain is Probable potassium transport system protein Kup 2 (621 aa).

Helical transmembrane passes span 12–32 (ITVAAIGVVFGDIGTSPLYAL), 52–72 (VLSLVFWAIIVLVTIKYVAII), 101–121 (WIITLLGIFAAALFYGDSMIT), 138–158 (PDLKSYVIPITLGILTGLFFI), 166–186 (VGKLFGPVMVAWFGILAILGL), 213–233 (GLAFLALGSVVLAVTGGEALY), 249–269 (FGFVMPALVLNYFGQGALLLI), 286–306 (ALIPMVGLATAATVIASQAVI), 338–358 (IYVPFTNWSLYLAVIALVIGF), 370–390 (IAVTGTMLIDTILVAFVMVLM), 396–416 (LLVALVAGTLLLVDIAFFAAN), and 420–440 (IPEGGWFPLAMGLVSFTVLTT).

This sequence belongs to the HAK/KUP transporter (TC 2.A.72) family.

It localises to the cell inner membrane. It carries out the reaction K(+)(in) + H(+)(in) = K(+)(out) + H(+)(out). In terms of biological role, transport of potassium into the cell. Likely operates as a K(+):H(+) symporter. In Dechloromonas aromatica (strain RCB), this protein is Probable potassium transport system protein Kup 2.